Consider the following 157-residue polypeptide: Crossover junction endodeoxyribonuclease RuvC (157 aa).

Residues Asp-7, Glu-67, and Asp-140 contribute to the active site. Mg(2+) contacts are provided by Asp-7, Glu-67, and Asp-140.

It belongs to the RuvC family. As to quaternary structure, homodimer which binds Holliday junction (HJ) DNA. The HJ becomes 2-fold symmetrical on binding to RuvC with unstacked arms; it has a different conformation from HJ DNA in complex with RuvA. In the full resolvosome a probable DNA-RuvA(4)-RuvB(12)-RuvC(2) complex forms which resolves the HJ. The cofactor is Mg(2+).

It localises to the cytoplasm. It carries out the reaction Endonucleolytic cleavage at a junction such as a reciprocal single-stranded crossover between two homologous DNA duplexes (Holliday junction).. Its function is as follows. The RuvA-RuvB-RuvC complex processes Holliday junction (HJ) DNA during genetic recombination and DNA repair. Endonuclease that resolves HJ intermediates. Cleaves cruciform DNA by making single-stranded nicks across the HJ at symmetrical positions within the homologous arms, yielding a 5'-phosphate and a 3'-hydroxyl group; requires a central core of homology in the junction. The consensus cleavage sequence is 5'-(A/T)TT(C/G)-3'. Cleavage occurs on the 3'-side of the TT dinucleotide at the point of strand exchange. HJ branch migration catalyzed by RuvA-RuvB allows RuvC to scan DNA until it finds its consensus sequence, where it cleaves and resolves the cruciform DNA. In Rickettsia rickettsii (strain Iowa), this protein is Crossover junction endodeoxyribonuclease RuvC.